The primary structure comprises 367 residues: GTPase Obg (367 aa).

The Obg domain occupies 1 to 158; sequence MFIDNVELTV…VQIRLELKLI (158 aa). Positions 159-358 constitute an OBG-type G domain; it reads ADVGLVGFPN…LKYALYDLVK (200 aa). GTP is bound by residues 165 to 172, 190 to 194, 212 to 215, 280 to 283, and 339 to 341; these read GFPNVGKS, FTTLT, DIPG, TKID, and SAV. Mg(2+)-binding residues include Ser172 and Thr192.

This sequence belongs to the TRAFAC class OBG-HflX-like GTPase superfamily. OBG GTPase family. Monomer. It depends on Mg(2+) as a cofactor.

The protein resides in the cytoplasm. Functionally, an essential GTPase which binds GTP, GDP and possibly (p)ppGpp with moderate affinity, with high nucleotide exchange rates and a fairly low GTP hydrolysis rate. Plays a role in control of the cell cycle, stress response, ribosome biogenesis and in those bacteria that undergo differentiation, in morphogenesis control. The sequence is that of GTPase Obg from Nitratiruptor sp. (strain SB155-2).